Consider the following 370-residue polypeptide: Histidinol-phosphate aminotransferase (370 aa).

Position 223 is an N6-(pyridoxal phosphate)lysine (Lys223).

This sequence belongs to the class-II pyridoxal-phosphate-dependent aminotransferase family. Histidinol-phosphate aminotransferase subfamily. Homodimer. Requires pyridoxal 5'-phosphate as cofactor.

It carries out the reaction L-histidinol phosphate + 2-oxoglutarate = 3-(imidazol-4-yl)-2-oxopropyl phosphate + L-glutamate. It functions in the pathway amino-acid biosynthesis; L-histidine biosynthesis; L-histidine from 5-phospho-alpha-D-ribose 1-diphosphate: step 7/9. The sequence is that of Histidinol-phosphate aminotransferase from Methylobacterium nodulans (strain LMG 21967 / CNCM I-2342 / ORS 2060).